Here is a 508-residue protein sequence, read N- to C-terminus: MARPAAGPGGISKFGNDFGLQRWRNTPRYDQTQPLEGSVCGYGLSNPFHESLFSCPAASWPQAKLGRPNTPQEPSKDLKRILSQISPKRIEATIRKLVSFGTRHTLSTQTNATHGIGAARDWIASEFQRYADASDGRLTVKVIGYEQQPDGSRVLFPVRISDVVATLKGSEDPERVYVVSGHYDSRASDPLDYKTDAPGANDDASGVAVSLEIARVMSQRNLPRPKATIVFAAVAGEEQGLLGSNFLAQTYRNSSTNVEGMFTNDIIGSSTADDGTKEPHVIRLFAQGVPPLNVENQAMREKRLMIGGENDTPARQLARFVKETAENKYTDMQVSVIYRLDRYLRGGDHRPFLEAGYPAARFTEPNENYAHQHQNIRIEKDPKTGKDIQYGDLPEFCDFDFISRVGKVNAAALWNLAMSPGMPRNVRVDTSDLSNDSKFTWDPPAGGNAGVGGYEIVWRSTIAPFWTNVMDVGMVQAATIDLSKDNVIFGIRARGKNGERGVAVLPFP.

Asn111 carries N-linked (GlcNAc...) asparagine glycosylation. Positions 182, 202, and 238 each coordinate Zn(2+). The N-linked (GlcNAc...) asparagine glycan is linked to Asn253. Residue Asp265 coordinates Zn(2+). The region spanning 422-508 is the Fibronectin type-III domain; sequence MPRNVRVDTS…ERGVAVLPFP (87 aa). An N-linked (GlcNAc...) asparagine glycan is attached at Asn435.

The protein belongs to the peptidase M28 family. M28B subfamily. Requires Zn(2+) as cofactor.

Its subcellular location is the secreted. The sequence is that of Probable zinc metalloprotease MCYG_04217 from Arthroderma otae (strain ATCC MYA-4605 / CBS 113480) (Microsporum canis).